A 245-amino-acid chain; its full sequence is tRNA1(Val) (adenine(37)-N6)-methyltransferase (245 aa).

The protein belongs to the methyltransferase superfamily. tRNA (adenine-N(6)-)-methyltransferase family.

It localises to the cytoplasm. The enzyme catalyses adenosine(37) in tRNA1(Val) + S-adenosyl-L-methionine = N(6)-methyladenosine(37) in tRNA1(Val) + S-adenosyl-L-homocysteine + H(+). In terms of biological role, specifically methylates the adenine in position 37 of tRNA(1)(Val) (anticodon cmo5UAC). The protein is tRNA1(Val) (adenine(37)-N6)-methyltransferase of Escherichia coli O157:H7 (strain EC4115 / EHEC).